The sequence spans 1007 residues: Exportin-7 (1007 aa).

The protein belongs to the exportin family.

Its subcellular location is the nucleus. The protein resides in the cytoplasm. It is found in the nuclear pore complex. Functionally, mediates the nuclear export of proteins (cargos) with broad substrate specificity. The protein is Exportin-7 (xpo7) of Dictyostelium discoideum (Social amoeba).